The following is a 368-amino-acid chain: tRNA-specific 2-thiouridylase MnmA (368 aa).

Residues 11–18 and Met-37 contribute to the ATP site; that span reads GMSGGVDS. Residues 97–99 are interaction with target base in tRNA; the sequence is NPD. The Nucleophile role is filled by Cys-102. Cysteines 102 and 199 form a disulfide. Gly-127 serves as a coordination point for ATP. Residues 149 to 151 are interaction with tRNA; the sequence is KDQ. Cys-199 functions as the Cysteine persulfide intermediate in the catalytic mechanism. The interaction with tRNA stretch occupies residues 311–312; it reads RY.

Belongs to the MnmA/TRMU family. As to quaternary structure, interacts with TusE.

The protein resides in the cytoplasm. The catalysed reaction is S-sulfanyl-L-cysteinyl-[protein] + uridine(34) in tRNA + AH2 + ATP = 2-thiouridine(34) in tRNA + L-cysteinyl-[protein] + A + AMP + diphosphate + H(+). Catalyzes the 2-thiolation of uridine at the wobble position (U34) of tRNA(Lys), tRNA(Glu) and tRNA(Gln), leading to the formation of s(2)U34, the first step of tRNA-mnm(5)s(2)U34 synthesis. Sulfur is provided by IscS, via a sulfur-relay system. Binds ATP and its substrate tRNAs. The polypeptide is tRNA-specific 2-thiouridylase MnmA (Citrobacter koseri (strain ATCC BAA-895 / CDC 4225-83 / SGSC4696)).